Consider the following 591-residue polypeptide: ATP-dependent lipid A-core flippase (591 aa).

5 consecutive transmembrane segments (helical) span residues 34–54 (LILAVLLMAGAAATQPTLAVI), 71–91 (IWSVPLAVIGLILLRGVCNFF), 158–178 (LVVISLIAVLLYMSWLLTVII), 258–278 (LTPLTQVCIAVAVGAVIAVAL), and 285–305 (TLTAGAFAAFMSALAQIFDPI). The region spanning 35 to 317 (ILAVLLMAGA…LTNLASKMQK (283 aa)) is the ABC transmembrane type-1 domain. Positions 350-586 (IEFRQIGHRF…GGLYATLYNM (237 aa)) constitute an ABC transporter domain. An ATP-binding site is contributed by 384-391 (GRSGSGKT).

This sequence belongs to the ABC transporter superfamily. Lipid exporter (TC 3.A.1.106) family. In terms of assembly, homodimer.

It is found in the cell inner membrane. It catalyses the reaction ATP + H2O + lipid A-core oligosaccharideSide 1 = ADP + phosphate + lipid A-core oligosaccharideSide 2.. Involved in lipopolysaccharide (LPS) biosynthesis. Translocates lipid A-core from the inner to the outer leaflet of the inner membrane. Transmembrane domains (TMD) form a pore in the inner membrane and the ATP-binding domain (NBD) is responsible for energy generation. The polypeptide is ATP-dependent lipid A-core flippase (Bordetella avium (strain 197N)).